We begin with the raw amino-acid sequence, 624 residues long: Actin-related protein 8 (624 aa).

Residue Met1 is modified to N-acetylmethionine. Residues 1–25 are compositionally biased toward basic and acidic residues; sequence MTQAEKGDTENGKEKGGEKEKEQRG. Residues 1 to 29 form a disordered region; sequence MTQAEKGDTENGKEKGGEKEKEQRGVKRP. Positions 55 and 56 each coordinate ATP. Ser132 carries the phosphoserine modification. An ATP-binding site is contributed by 283–286; it reads DVGD. A Phosphoserine modification is found at Ser412. The interval 430 to 462 is disordered; that stretch reads SKQEQSAKATADRKSASKPIGFEGDLRGQSSDL.

This sequence belongs to the actin family. ARP8 subfamily. In terms of assembly, component of the chromatin remodeling INO80 complex; specifically part of a complex module associated with the DBINO domain of INO80. Exists as monomers and dimers, but the dimer is most probably the biologically relevant form required for stable interactions with histones that exploits the twofold symmetry of the nucleosome core.

The protein resides in the nucleus. It is found in the chromosome. Functionally, plays an important role in the functional organization of mitotic chromosomes. Exhibits low basal ATPase activity, and unable to polymerize. In terms of biological role, proposed core component of the chromatin remodeling INO80 complex which is involved in transcriptional regulation, DNA replication and probably DNA repair. Required for the recruitment of INO80 (and probably the INO80 complex) to sites of DNA damage Strongly prefer nucleosomes and H3-H4 tetramers over H2A-H2B dimers, suggesting it may act as a nucleosome recognition module within the complex. This chain is Actin-related protein 8 (ACTR8), found in Pongo abelii (Sumatran orangutan).